A 305-amino-acid polypeptide reads, in one-letter code: tRNA pseudouridine synthase B (305 aa).

Residue Asp-48 is the Nucleophile of the active site.

This sequence belongs to the pseudouridine synthase TruB family. Type 1 subfamily.

It catalyses the reaction uridine(55) in tRNA = pseudouridine(55) in tRNA. In terms of biological role, responsible for synthesis of pseudouridine from uracil-55 in the psi GC loop of transfer RNAs. The chain is tRNA pseudouridine synthase B from Pseudomonas fluorescens (strain Pf0-1).